Here is a 167-residue protein sequence, read N- to C-terminus: Disulfide bond formation protein B (167 aa).

Over 1–12 (MFLNLLDAPRRL) the chain is Cytoplasmic. A helical membrane pass occupies residues 13 to 29 (LALVALGCVALLAFGLY). Residues 30 to 47 (LQHVVGLEPCPMCIVQRY) lie on the Periplasmic side of the membrane. A disulfide bond links cysteine 39 and cysteine 42. The chain crosses the membrane as a helical span at residues 48–63 (ALVLVAIVAGLTAITS). Residues 64–69 (NKKGLI) lie on the Cytoplasmic side of the membrane. The helical transmembrane segment at 70-87 (TGSGVLLLLAGFGAFVAA) threads the bilayer. The Periplasmic portion of the chain corresponds to 88-143 (RQSFLQWYPPEVASCGRDFYGMIETFPLQRAIPMIFKGSGDCAKVDWTFLGGSIAN). Cysteine 102 and cysteine 129 form a disulfide bridge. A helical membrane pass occupies residues 144–162 (WSFVCFAVIGLTALTLIAR). The Cytoplasmic segment spans residues 163-167 (LARQR).

It belongs to the DsbB family.

The protein resides in the cell inner membrane. Functionally, required for disulfide bond formation in some periplasmic proteins. Acts by oxidizing the DsbA protein. This Polaromonas naphthalenivorans (strain CJ2) protein is Disulfide bond formation protein B.